A 206-amino-acid polypeptide reads, in one-letter code: uncharacterized protein (206 aa).

The disordered stretch occupies residues 81–132 (EEQQQQQHHVHGPGCSHGHHHDSHANDGHHDEHHDEHHDHVNPDDVEDEFPR). Positions 82–96 (EQQQQQHHVHGPGCS) are enriched in low complexity. Positions 103–123 (SHANDGHHDEHHDEHHDHVNP) are enriched in basic and acidic residues. Residues 150–166 (YLTALCLLPIIGSLFSI) traverse the membrane as a helical segment.

It is found in the membrane. This is an uncharacterized protein from Dictyostelium discoideum (Social amoeba).